We begin with the raw amino-acid sequence, 166 residues long: Crossover junction endodeoxyribonuclease RuvC (166 aa).

Active-site residues include D7, E67, and D140. D7, E67, and D140 together coordinate Mg(2+).

Belongs to the RuvC family. In terms of assembly, homodimer which binds Holliday junction (HJ) DNA. The HJ becomes 2-fold symmetrical on binding to RuvC with unstacked arms; it has a different conformation from HJ DNA in complex with RuvA. In the full resolvosome a probable DNA-RuvA(4)-RuvB(12)-RuvC(2) complex forms which resolves the HJ. Mg(2+) serves as cofactor.

The protein localises to the cytoplasm. It carries out the reaction Endonucleolytic cleavage at a junction such as a reciprocal single-stranded crossover between two homologous DNA duplexes (Holliday junction).. In terms of biological role, the RuvA-RuvB-RuvC complex processes Holliday junction (HJ) DNA during genetic recombination and DNA repair. Endonuclease that resolves HJ intermediates. Cleaves cruciform DNA by making single-stranded nicks across the HJ at symmetrical positions within the homologous arms, yielding a 5'-phosphate and a 3'-hydroxyl group; requires a central core of homology in the junction. The consensus cleavage sequence is 5'-(A/T)TT(C/G)-3'. Cleavage occurs on the 3'-side of the TT dinucleotide at the point of strand exchange. HJ branch migration catalyzed by RuvA-RuvB allows RuvC to scan DNA until it finds its consensus sequence, where it cleaves and resolves the cruciform DNA. The polypeptide is Crossover junction endodeoxyribonuclease RuvC (Ruminiclostridium cellulolyticum (strain ATCC 35319 / DSM 5812 / JCM 6584 / H10) (Clostridium cellulolyticum)).